The following is a 491-amino-acid chain: ATP synthase subunit beta, chloroplastic (491 aa).

172–179 (GGAGVGKT) is an ATP binding site.

It belongs to the ATPase alpha/beta chains family. In terms of assembly, F-type ATPases have 2 components, CF(1) - the catalytic core - and CF(0) - the membrane proton channel. CF(1) has five subunits: alpha(3), beta(3), gamma(1), delta(1), epsilon(1). CF(0) has four main subunits: a(1), b(1), b'(1) and c(9-12).

Its subcellular location is the plastid. It is found in the chloroplast thylakoid membrane. It catalyses the reaction ATP + H2O + 4 H(+)(in) = ADP + phosphate + 5 H(+)(out). Produces ATP from ADP in the presence of a proton gradient across the membrane. The catalytic sites are hosted primarily by the beta subunits. This is ATP synthase subunit beta, chloroplastic from Pisum sativum (Garden pea).